The chain runs to 317 residues: MNKFKGNKVVLIGNGAVGSIYAFSLVNQSIVDELVIIDLDAEKVRGDVMDLKHATPYSPTTVRVKAGEYSDCHDADLVVICAGAAQKPGETRLDLVSKNLKIFKSIVGEVMASKFDGIFLVATNPVDILAYATWKFSGLPKERVIGSGTILDSARFRLLLSEAFDVAPRSVDAQIIGEHGDTELPVWSHANIAGQPLKTLLEQRPEGKAQIEQIFVQTRDAAYDIIQAKGATYYGVAMGLARITEAIFRNEDAVLTVSALLEGEYDEEDVYIGVPAVINRNGIRNVVEIPLNDEEQSKFAHSAKTLKDIMAEAEELK.

NAD(+)-binding positions include valine 17, aspartate 38, lysine 43, tyrosine 69, and 83–84; that span reads GA. The substrate site is built by glutamine 86 and arginine 92. NAD(+)-binding positions include serine 105, 122-124, and serine 147; that span reads ATN. Residue 124-127 coordinates substrate; sequence NPVD. 152-155 provides a ligand contact to substrate; sequence DSAR. Histidine 179 (proton acceptor) is an active-site residue. The residue at position 223 (tyrosine 223) is a Phosphotyrosine. Threonine 232 contacts substrate.

Belongs to the LDH/MDH superfamily. LDH family. As to quaternary structure, homotetramer.

The protein resides in the cytoplasm. It carries out the reaction (S)-lactate + NAD(+) = pyruvate + NADH + H(+). The protein operates within fermentation; pyruvate fermentation to lactate; (S)-lactate from pyruvate: step 1/1. Functionally, catalyzes the conversion of lactate to pyruvate (Potential). Appears to be the primary factor that allows S.aureus growth during nitrosative stress in both aerobically and anaerobically cultured cells. The sequence is that of L-lactate dehydrogenase 1 from Staphylococcus aureus (strain MRSA252).